The following is a 456-amino-acid chain: MAGLQRLASHLPVGVMLPHNTTEAPGPHSAKQDSYEQGDSSQQSLKGHLRNNFQKQLLSNKELILDKVYTHPKWNTQTKARSYSYPHCTGISQQDPESDSQGQGNGLFYSSGPQSWYPKANNQDFIPFTKKRVGVDRAFPLKPMVHRKSCSTGEAGTDGDHNVYPRPPEPREFSSRNFGVRNQGNFSVVGTVLAATQAEKAVANFDRTEWVQIRRLEAAGESLEEEIRRKQILLRGKLKKTEEELRRIQTQKEQAKENENGELQKIILPRSRVKGNKSNTMYKPIFSPEFEFEEEFSRDRREDETWGRSQQNSGPFQFSDYRIQRLKRERLVASNNKIRDPVSEPSVEKFSPPSETPVGALQGSARNSSLSMAPDSSGSSGSIEEPQLGECSHCGRKFLSFRLERHSNICSRMRGSKRKVFDSSRARAKGTELEQYLNWKGPASAKAEPPQKSNWR.

Disordered stretches follow at residues 16–46 and 85–113; these read MLPHNTTEAPGPHSAKQDSYEQGDSSQQSLK and YPHCTGISQQDPESDSQGQGNGLFYSSGP. Composition is skewed to polar residues over residues 35–46 and 90–102; these read YEQGDSSQQSLK and GISQQDPESDSQG. Positions 211–265 form a coiled coil; it reads VQIRRLEAAGESLEEEIRRKQILLRGKLKKTEEELRRIQTQKEQAKENENGELQK. Residues 336–388 are disordered; sequence NKIRDPVSEPSVEKFSPPSETPVGALQGSARNSSLSMAPDSSGSSGSIEEPQL. Over residues 368–382 the composition is skewed to low complexity; the sequence is SSLSMAPDSSGSSGS. The segment at 387 to 416 adopts a C2HC/C3H-type zinc-finger fold; sequence QLGECSHCGRKFLSFRLERHSNICSRMRGS. C391, C394, H406, and C410 together coordinate Zn(2+).

It belongs to the ZC2HC1 family. The cofactor is Zn(2+).

In Homo sapiens (Human), this protein is Zinc finger C2HC domain-containing protein 1C (ZC2HC1C).